Reading from the N-terminus, the 376-residue chain is Actin (376 aa).

The protein belongs to the actin family.

The protein resides in the cytoplasm. The protein localises to the cytoskeleton. The catalysed reaction is ATP + H2O = ADP + phosphate + H(+). Functionally, actins are highly conserved proteins that are involved in various types of cell motility and are ubiquitously expressed in all eukaryotic cells. The protein is Actin of Trypanosoma cruzi.